A 1179-amino-acid chain; its full sequence is Dynein axonemal assembly factor 9 (1179 aa).

As to quaternary structure, interacts with ARL3.

May act as an effector for ARL3. The polypeptide is Dynein axonemal assembly factor 9 (Mus musculus (Mouse)).